Reading from the N-terminus, the 830-residue chain is ATP-dependent DNA helicase chl-1 (830 aa).

One can recognise a Helicase ATP-binding domain in the interval 1–403 (MDEFSFPFQP…HNLLYMKQLE (403 aa)). Position 35–42 (35–42 (SPTGTGKS)) interacts with ATP. 2 stretches are compositionally biased toward basic and acidic residues: residues 124–140 (GMVE…RDTD) and 157–168 (NDEKSEKQRDSD). Positions 124–173 (GMVEVSRKRKAPARDTDQFLEPQDEAAPSEEYNNDEKSEKQRDSDFFDDV) are disordered. [4Fe-4S] cluster-binding residues include cysteine 222, cysteine 240, cysteine 272, and cysteine 308. The DEAH box signature appears at 351–354 (DEAH).

The protein belongs to the DEAD box helicase family. DEAH subfamily. DDX11/CHL1 sub-subfamily. [4Fe-4S] cluster is required as a cofactor.

The protein localises to the nucleus. It carries out the reaction Couples ATP hydrolysis with the unwinding of duplex DNA at the replication fork by translocating in the 5'-3' direction. This creates two antiparallel DNA single strands (ssDNA). The leading ssDNA polymer is the template for DNA polymerase III holoenzyme which synthesizes a continuous strand.. The catalysed reaction is ATP + H2O = ADP + phosphate + H(+). Required for normal cell proliferation and chromosome stability. Plays a role in DNA repair during replication. The sequence is that of ATP-dependent DNA helicase chl-1 from Caenorhabditis elegans.